A 300-amino-acid chain; its full sequence is MSWTTIESDAGVFTDLIENLGVKDVEVDELYSLDVDSLRQFPDIYGIIFLFKWNSKVDKPDGTMDYDSMDNIFFAKQVINNACATQALLSVLLNHSDEIDLGTTLSEFKDFSKTLPPELKGEALGNSEHIRCCHNSFARSDPFISEEVRAATDEDEVYHFIAYTNINNVFYELDGLQAAPINHGSCTKEEFAEKAVSVIQARIANYDPAEIRFNLMVICKDKKASLLTREDLTDEEKAASIAVEDEKRLRWKRENQLRRHNFVGLFVELSKLLVKDRIDKNTWNSTLETAKAKYASQKRP.

One can recognise a UCH catalytic domain in the interval 2 to 220 (SWTTIESDAG…IRFNLMVICK (219 aa)). Cys-83 (nucleophile) is an active-site residue. Catalysis depends on His-159, which acts as the Proton donor. Residues 261-290 (NFVGLFVELSKLLVKDRIDKNTWNSTLETA) enclose the ULD domain.

The protein belongs to the peptidase C12 family. Component of the 26S proteasome. Interacts with rpn10.

The protein resides in the nucleus. It catalyses the reaction Thiol-dependent hydrolysis of ester, thioester, amide, peptide and isopeptide bonds formed by the C-terminal Gly of ubiquitin (a 76-residue protein attached to proteins as an intracellular targeting signal).. Functionally, ubiquitin-protein hydrolase is involved both in the processing of ubiquitin precursors and of ubiquitinated proteins. This enzyme is a thiol protease that recognizes and hydrolyzes a peptide bond at the C-terminal glycine of ubiquitin. This Schizosaccharomyces pombe (strain 972 / ATCC 24843) (Fission yeast) protein is Ubiquitin carboxyl-terminal hydrolase 2 (uch2).